We begin with the raw amino-acid sequence, 61 residues long: UPF0391 membrane protein Bpro_0066 (61 aa).

The next 2 helical transmembrane spans lie at 5-25 (AIIF…GVAA) and 33-53 (ILFG…ALGV).

It belongs to the UPF0391 family.

The protein resides in the cell membrane. This Polaromonas sp. (strain JS666 / ATCC BAA-500) protein is UPF0391 membrane protein Bpro_0066.